The primary structure comprises 97 residues: Small ribosomal subunit protein bS20 (97 aa).

This sequence belongs to the bacterial ribosomal protein bS20 family.

Binds directly to 16S ribosomal RNA. This Prochlorococcus marinus (strain MIT 9301) protein is Small ribosomal subunit protein bS20.